The following is a 78-amino-acid chain: Short neurotoxin OH-5 (78 aa).

The signal sequence occupies residues 1 to 21 (MKNLLLTFLVVTIVCLDLGYT). 4 disulfides stabilise this stretch: Cys-24–Cys-40, Cys-33–Cys-58, Cys-62–Cys-70, and Cys-71–Cys-76.

The protein belongs to the three-finger toxin family. Short-chain subfamily. Expressed by the venom gland.

The protein resides in the secreted. Functionally, this three-finger toxin binds and inhibits the nicotinic acetylcholine receptor (nAChR). The chain is Short neurotoxin OH-5 from Ophiophagus hannah (King cobra).